Reading from the N-terminus, the 526-residue chain is CTP synthase (526 aa).

The amidoligase domain stretch occupies residues M1 to L270. S12 provides a ligand contact to CTP. S12 is a UTP binding site. ATP contacts are provided by residues G13–I18 and D70. Mg(2+) contacts are provided by D70 and E145. CTP contacts are provided by residues D152–E154, K191–Q196, and K227. Residues K191–Q196 and K227 contribute to the UTP site. In terms of domain architecture, Glutamine amidotransferase type-1 spans V293–T525. Position 349 (G349) interacts with L-glutamine. The active-site Nucleophile; for glutamine hydrolysis is C376. L-glutamine contacts are provided by residues L377–Q380, E400, and R455. Catalysis depends on residues H498 and E500.

The protein belongs to the CTP synthase family. Homotetramer.

The catalysed reaction is UTP + L-glutamine + ATP + H2O = CTP + L-glutamate + ADP + phosphate + 2 H(+). It catalyses the reaction L-glutamine + H2O = L-glutamate + NH4(+). It carries out the reaction UTP + NH4(+) + ATP = CTP + ADP + phosphate + 2 H(+). The protein operates within pyrimidine metabolism; CTP biosynthesis via de novo pathway; CTP from UDP: step 2/2. Allosterically activated by GTP, when glutamine is the substrate; GTP has no effect on the reaction when ammonia is the substrate. The allosteric effector GTP functions by stabilizing the protein conformation that binds the tetrahedral intermediate(s) formed during glutamine hydrolysis. Inhibited by the product CTP, via allosteric rather than competitive inhibition. Its function is as follows. Catalyzes the ATP-dependent amination of UTP to CTP with either L-glutamine or ammonia as the source of nitrogen. Regulates intracellular CTP levels through interactions with the four ribonucleotide triphosphates. In Methanoregula boonei (strain DSM 21154 / JCM 14090 / 6A8), this protein is CTP synthase.